The sequence spans 257 residues: tRNA (guanine-N(1)-)-methyltransferase (257 aa).

S-adenosyl-L-methionine contacts are provided by residues Gly117 and 137–142; that span reads LGDFVL.

The protein belongs to the RNA methyltransferase TrmD family. As to quaternary structure, homodimer.

It localises to the cytoplasm. It catalyses the reaction guanosine(37) in tRNA + S-adenosyl-L-methionine = N(1)-methylguanosine(37) in tRNA + S-adenosyl-L-homocysteine + H(+). Functionally, specifically methylates guanosine-37 in various tRNAs. In Bordetella parapertussis (strain 12822 / ATCC BAA-587 / NCTC 13253), this protein is tRNA (guanine-N(1)-)-methyltransferase.